Consider the following 176-residue polypeptide: Acireductone dioxygenase (176 aa).

The Fe(2+) site is built by H100, H102, E106, and H145. Positions 100, 102, 106, and 145 each coordinate Ni(2+).

The protein belongs to the acireductone dioxygenase (ARD) family. As to quaternary structure, monomer. The cofactor is Fe(2+). It depends on Ni(2+) as a cofactor.

It carries out the reaction 1,2-dihydroxy-5-(methylsulfanyl)pent-1-en-3-one + O2 = 3-(methylsulfanyl)propanoate + CO + formate + 2 H(+). It catalyses the reaction 1,2-dihydroxy-5-(methylsulfanyl)pent-1-en-3-one + O2 = 4-methylsulfanyl-2-oxobutanoate + formate + 2 H(+). Its pathway is amino-acid biosynthesis; L-methionine biosynthesis via salvage pathway; L-methionine from S-methyl-5-thio-alpha-D-ribose 1-phosphate: step 5/6. Its function is as follows. Catalyzes 2 different reactions between oxygen and the acireductone 1,2-dihydroxy-3-keto-5-methylthiopentene (DHK-MTPene) depending upon the metal bound in the active site. Fe-containing acireductone dioxygenase (Fe-ARD) produces formate and 2-keto-4-methylthiobutyrate (KMTB), the alpha-ketoacid precursor of methionine in the methionine recycle pathway. Ni-containing acireductone dioxygenase (Ni-ARD) produces methylthiopropionate, carbon monoxide and formate, and does not lie on the methionine recycle pathway. The protein is Acireductone dioxygenase of Bacillus pumilus (strain SAFR-032).